Here is a 512-residue protein sequence, read N- to C-terminus: Ribose import ATP-binding protein RbsA 1 (512 aa).

ABC transporter domains follow at residues 8-244 and 257-502; these read FRME…IGRE and PEEK…LNIG. Residue 40–47 coordinates ATP; sequence GENGAGKS.

This sequence belongs to the ABC transporter superfamily. Ribose importer (TC 3.A.1.2.1) family. As to quaternary structure, the complex is composed of an ATP-binding protein (RbsA), two transmembrane proteins (RbsC) and a solute-binding protein (RbsB).

The protein localises to the cell inner membrane. It catalyses the reaction D-ribose(out) + ATP + H2O = D-ribose(in) + ADP + phosphate + H(+). Its function is as follows. Part of the ABC transporter complex RbsABC involved in ribose import. Responsible for energy coupling to the transport system. This is Ribose import ATP-binding protein RbsA 1 from Rhizobium etli (strain ATCC 51251 / DSM 11541 / JCM 21823 / NBRC 15573 / CFN 42).